Reading from the N-terminus, the 132-residue chain is Small ribosomal subunit protein uS9 (132 aa).

Residues G104–R132 form a disordered region. The span at K113–R132 shows a compositional bias: basic residues.

This sequence belongs to the universal ribosomal protein uS9 family.

This Natranaerobius thermophilus (strain ATCC BAA-1301 / DSM 18059 / JW/NM-WN-LF) protein is Small ribosomal subunit protein uS9.